A 119-amino-acid chain; its full sequence is Protein BEX4 (119 aa).

Positions 1–53 are disordered; the sequence is MESKEELAANNLNGENAQQENEGREQAPTQNEETRHLGGGEGQKPGGNIRRGR. Residues 8-20 show a composition bias toward low complexity; it reads AANNLNGENAQQE. The tract at residues 31-89 is interaction with SIRT2; it reads NEETRHLGGGEGQKPGGNIRRGRVRRLVPNFRWAIPNRHIEHNEARDDVERFVGQMMEI. Positions 31 to 119 are interaction with alpha-tubulin; that stretch reads NEETRHLGGG…DNHYDFCLIP (89 aa). Residue cysteine 116 coordinates Zn(2+).

The protein belongs to the BEX family. In terms of assembly, interacts with alpha-tubulin. Interacts with SIRT2. In terms of processing, ubiquitinated and degraded by the proteasome.

The protein localises to the cytoplasm. Its subcellular location is the cytoskeleton. It is found in the spindle pole. The protein resides in the nucleus. In terms of biological role, may play a role in microtubule deacetylation by negatively regulating the SIRT2 deacetylase activity toward alpha-tubulin and thereby participate in the control of cell cycle progression and genomic stability. In absence of reductive stress, acts as a pseudosubstrate for the CRL2(FEM1B) complex: associates with FEM1B via zinc, thereby preventing association between FEM1B and its substrates. This Pongo abelii (Sumatran orangutan) protein is Protein BEX4.